A 624-amino-acid chain; its full sequence is MNCNSNKYPILGLINTPKELRQLSEDHLAKLCNELRQFLLTSVSKSSGHFASGLGTIELTVALHYVYNTPFDYLIWDVGHQAYPHKILTGRRERIFSIRRKNGLHPFPCRDESEYDVLSVGHSSTSISAGLGLAIAAEREMLGRRTVCVIGDGAITAGMAFEAMNHAGFTKSDLLIILNDNEMSISENVGALNNHHTHILSKKVYSNLKVDNNKILSDVLSTNTLIKHIGNQIKNFNGTSSSLFSQLGFNYIGPVNGHDVLELVYILRNIRDMKGPQFLHIITKKGCGYEPAEKDPIKWHAVPKFNPESGSLPVEHSKNITYSAIFGDWLCQVAARDNKIIGITPAMREGSGMSIFSQKYPKQYFDVAIAEQHAVTFAAGLAIAGYKPIVAIYSTFLQRAYDQVIHDVAIQNLPVLFAVDRGGIVGADGQTHQGAFDLSYLRCIPNMIIMTPSDACECKLMLYTGYRYRYGPSVVRYPKGYAVPGNLADTTKLYTLPLSKGVIRRQGNCIAILNFGTLLQSAYNVASKLNATLVDMRFVKPLDENLIKTLAKNHQVLITLEENTVMGGAGSGVNEFIMQNKLSIPVLNIGLPDFFISQGSQSEILSELGLDSIGIYKKIIKWIH.

Thiamine diphosphate-binding positions include His80 and 121-123; that span reads GHS. Residue Asp152 participates in Mg(2+) binding. Residues 153 to 154, Asn181, Tyr289, and Glu371 contribute to the thiamine diphosphate site; that span reads GA. Mg(2+) is bound at residue Asn181.

It belongs to the transketolase family. DXPS subfamily. Homodimer. It depends on Mg(2+) as a cofactor. The cofactor is thiamine diphosphate.

The catalysed reaction is D-glyceraldehyde 3-phosphate + pyruvate + H(+) = 1-deoxy-D-xylulose 5-phosphate + CO2. The protein operates within metabolic intermediate biosynthesis; 1-deoxy-D-xylulose 5-phosphate biosynthesis; 1-deoxy-D-xylulose 5-phosphate from D-glyceraldehyde 3-phosphate and pyruvate: step 1/1. In terms of biological role, catalyzes the acyloin condensation reaction between C atoms 2 and 3 of pyruvate and glyceraldehyde 3-phosphate to yield 1-deoxy-D-xylulose-5-phosphate (DXP). The chain is 1-deoxy-D-xylulose-5-phosphate synthase from Blochmanniella pennsylvanica (strain BPEN).